The chain runs to 508 residues: Photosystem II CP47 reaction center protein (508 aa).

The next 6 helical transmembrane spans lie at 21–36 (SVHI…WAGS), 101–115 (IVFS…IWHW), 140–156 (GIHL…FGAF), 203–218 (IAAG…FHLS), 237–252 (VLSS…AFVV), and 457–472 (SFAL…HGAR).

This sequence belongs to the PsbB/PsbC family. PsbB subfamily. PSII is composed of 1 copy each of membrane proteins PsbA, PsbB, PsbC, PsbD, PsbE, PsbF, PsbH, PsbI, PsbJ, PsbK, PsbL, PsbM, PsbT, PsbX, PsbY, PsbZ, Psb30/Ycf12, at least 3 peripheral proteins of the oxygen-evolving complex and a large number of cofactors. It forms dimeric complexes. It depends on Binds multiple chlorophylls. PSII binds additional chlorophylls, carotenoids and specific lipids. as a cofactor.

It is found in the plastid. The protein resides in the chloroplast thylakoid membrane. One of the components of the core complex of photosystem II (PSII). It binds chlorophyll and helps catalyze the primary light-induced photochemical processes of PSII. PSII is a light-driven water:plastoquinone oxidoreductase, using light energy to abstract electrons from H(2)O, generating O(2) and a proton gradient subsequently used for ATP formation. The polypeptide is Photosystem II CP47 reaction center protein (Gossypium hirsutum (Upland cotton)).